A 316-amino-acid chain; its full sequence is 4-hydroxy-3-methylbut-2-enyl diphosphate reductase (316 aa).

Cys12 is a binding site for [4Fe-4S] cluster. (2E)-4-hydroxy-3-methylbut-2-enyl diphosphate is bound by residues His43 and His81. Dimethylallyl diphosphate-binding residues include His43 and His81. The isopentenyl diphosphate site is built by His43 and His81. Residue Cys103 participates in [4Fe-4S] cluster binding. (2E)-4-hydroxy-3-methylbut-2-enyl diphosphate is bound at residue His131. Position 131 (His131) interacts with dimethylallyl diphosphate. His131 lines the isopentenyl diphosphate pocket. The Proton donor role is filled by Glu133. Residue Thr170 participates in (2E)-4-hydroxy-3-methylbut-2-enyl diphosphate binding. Cys198 provides a ligand contact to [4Fe-4S] cluster. Residues Ser226, Asn228, and Ser271 each contribute to the (2E)-4-hydroxy-3-methylbut-2-enyl diphosphate site. Residues Ser226, Asn228, and Ser271 each contribute to the dimethylallyl diphosphate site. Residues Ser226, Asn228, and Ser271 each coordinate isopentenyl diphosphate.

It belongs to the IspH family. Requires [4Fe-4S] cluster as cofactor.

It catalyses the reaction isopentenyl diphosphate + 2 oxidized [2Fe-2S]-[ferredoxin] + H2O = (2E)-4-hydroxy-3-methylbut-2-enyl diphosphate + 2 reduced [2Fe-2S]-[ferredoxin] + 2 H(+). It carries out the reaction dimethylallyl diphosphate + 2 oxidized [2Fe-2S]-[ferredoxin] + H2O = (2E)-4-hydroxy-3-methylbut-2-enyl diphosphate + 2 reduced [2Fe-2S]-[ferredoxin] + 2 H(+). Its pathway is isoprenoid biosynthesis; dimethylallyl diphosphate biosynthesis; dimethylallyl diphosphate from (2E)-4-hydroxy-3-methylbutenyl diphosphate: step 1/1. It participates in isoprenoid biosynthesis; isopentenyl diphosphate biosynthesis via DXP pathway; isopentenyl diphosphate from 1-deoxy-D-xylulose 5-phosphate: step 6/6. Catalyzes the conversion of 1-hydroxy-2-methyl-2-(E)-butenyl 4-diphosphate (HMBPP) into a mixture of isopentenyl diphosphate (IPP) and dimethylallyl diphosphate (DMAPP). Acts in the terminal step of the DOXP/MEP pathway for isoprenoid precursor biosynthesis. This chain is 4-hydroxy-3-methylbut-2-enyl diphosphate reductase, found in Bacillus mycoides (strain KBAB4) (Bacillus weihenstephanensis).